Reading from the N-terminus, the 1216-residue chain is RAB11-binding protein RELCH (1216 aa).

Disordered stretches follow at residues 1-73 (MAAM…GLPG) and 135-177 (GNFE…QLNR). An N-acetylalanine modification is found at Ala-2. A phosphoserine mark is found at Ser-20 and Ser-22. The segment covering 21–31 (DSDEDDDEVAA) has biased composition (acidic residues). Residue Thr-32 is modified to Phosphothreonine. Phosphoserine occurs at positions 54 and 56. Over residues 148–163 (GAPGVPGAAGVGGAGG) the composition is skewed to gly residues. Residues Ser-180 and Ser-182 each carry the phosphoserine modification. The residue at position 183 (Thr-183) is a Phosphothreonine. The residue at position 186 (Ser-186) is a Phosphoserine. A coiled-coil region spans residues 197 to 231 (NRETDEKVAVLEFELRKAKETIQALRANLTKAAEH). Positions 255-287 (EKRALNFLVNEFLLKNNYKLTSITFSDENDDQD) constitute a LisH domain. Residues 359–397 (VQKLEDKISLLNSEKWSLMEQIRRLKSEMDFLKNEHFAI) are a coiled coil. Ser-385 is modified (phosphoserine). The disordered stretch occupies residues 401-477 (CDSVQPPLDQ…SSLSSKKTVH (77 aa)). A compositionally biased stretch (basic and acidic residues) spans 411–435 (LPHKDSEDSGQHPDVNSSDKGKNTD). A Phosphoserine modification is found at Ser-453. The interval 497 to 779 (CRMSADSRLG…SSKAKLHGEV (283 aa)) is interaction with RAB11A and RAB11B. HEAT repeat units lie at residues 601–639 (LLPQ…RSSL) and 640–679 (VLSM…KYHQ). At Ser-792 the chain carries Phosphoserine. An HEAT 3 repeat occupies 1004–1042 (VAPALVTLSSDPEFSVRIATIPAFGTIMETVIQRELLER). Ser-1149 is modified (phosphoserine).

It localises to the recycling endosome. Its subcellular location is the golgi apparatus. The protein resides in the trans-Golgi network. Functionally, regulates intracellular cholesterol distribution from recycling endosomes to the trans-Golgi network through interactions with RAB11 and OSBP. Functions in membrane tethering and promotes OSBP-mediated cholesterol transfer between RAB11-bound recycling endosomes and OSBP-bound Golgi-like membranes. In Homo sapiens (Human), this protein is RAB11-binding protein RELCH.